A 195-amino-acid chain; its full sequence is MSKQEKSNVEDKSLDIETAVQVETAQESASGALEELSVEEQLERAKDTIKELEDSCDQFKDEALRAKAEMENIRKRAERDVSNARKFGIEKFAKELLPVIDSIGQALKHEVKHEEAIAMKEGIELTAKMLVDILKKNGVEELDPKGEKFDPNLHEAMAMIPNPEFEDNTIFDVFQKGYMLNGRIVRAAKVVIVKN.

This sequence belongs to the GrpE family. As to quaternary structure, homodimer.

It is found in the cytoplasm. In terms of biological role, participates actively in the response to hyperosmotic and heat shock by preventing the aggregation of stress-denatured proteins, in association with DnaK and GrpE. It is the nucleotide exchange factor for DnaK and may function as a thermosensor. Unfolded proteins bind initially to DnaJ; upon interaction with the DnaJ-bound protein, DnaK hydrolyzes its bound ATP, resulting in the formation of a stable complex. GrpE releases ADP from DnaK; ATP binding to DnaK triggers the release of the substrate protein, thus completing the reaction cycle. Several rounds of ATP-dependent interactions between DnaJ, DnaK and GrpE are required for fully efficient folding. This is Protein GrpE from Francisella tularensis subsp. mediasiatica (strain FSC147).